The following is a 443-amino-acid chain: Oxygen-dependent coproporphyrinogen-III oxidase, mitochondrial (443 aa).

The N-terminal 98 residues, Met-1 to Arg-98, are a transit peptide targeting the mitochondrion. The tract at residues Glu-89–Leu-112 is disordered. At Ser-101 the chain carries Phosphoserine. Positions Gly-103 to Leu-112 are enriched in basic and acidic residues. Positions Val-182–Lys-191 are important for dimerization. Ser-233 is a coproporphyrinogen III binding site. The Proton donor role is filled by His-247. Asn-249 to Arg-251 is a binding site for coproporphyrinogen III. Positions Tyr-381 to Glu-417 are important for dimerization. Lys-393 carries the N6-acetyllysine; alternate modification. Lys-393 is modified (N6-succinyllysine; alternate). Residue Gly-400–Arg-402 coordinates coproporphyrinogen III.

The protein belongs to the aerobic coproporphyrinogen-III oxidase family. Homodimer. As to expression, expressed in erythroid cells. Expressed in liver.

It localises to the mitochondrion intermembrane space. The enzyme catalyses coproporphyrinogen III + O2 + 2 H(+) = protoporphyrinogen IX + 2 CO2 + 2 H2O. Its pathway is porphyrin-containing compound metabolism; protoporphyrin-IX biosynthesis; protoporphyrinogen-IX from coproporphyrinogen-III (O2 route): step 1/1. Involved in the heme biosynthesis. Catalyzes the aerobic oxidative decarboxylation of propionate groups of rings A and B of coproporphyrinogen-III to yield the vinyl groups in protoporphyrinogen-IX. The sequence is that of Oxygen-dependent coproporphyrinogen-III oxidase, mitochondrial (Cpox) from Mus musculus (Mouse).